Reading from the N-terminus, the 245-residue chain is UPF0246 protein LBUL_1917 (245 aa).

Belongs to the UPF0246 family.

In Lactobacillus delbrueckii subsp. bulgaricus (strain ATCC BAA-365 / Lb-18), this protein is UPF0246 protein LBUL_1917.